Here is a 409-residue protein sequence, read N- to C-terminus: Broad specificity amino-acid racemase (409 aa).

A signal peptide spans 1-25 (MRLKKTLLSIAIAAATFTPAMHSIA). An intrachain disulfide couples C72 to C98. Residue K76 is the Proton acceptor of the active site. K76 carries the post-translational modification N6-(pyridoxal phosphate)lysine. R175 is a binding site for substrate. The active-site Proton acceptor is Y301. Residue M349 coordinates substrate.

It belongs to the alanine racemase family. Bsr subfamily. The cofactor is pyridoxal 5'-phosphate.

It localises to the periplasm. It carries out the reaction an L-alpha-amino acid = a D-alpha-amino acid. The catalysed reaction is L-lysine = D-lysine. The enzyme catalyses L-arginine = D-arginine. Amino-acid racemase able to utilize a broad range of substrates. The sequence is that of Broad specificity amino-acid racemase from Vibrio parahaemolyticus serotype O3:K6 (strain RIMD 2210633).